The following is a 266-amino-acid chain: Tropinone reductase homolog At1g07440 (266 aa).

18 to 42 (LVTGGTKGIGHAIVEEFAGFGAVIH) is an NADP(+) binding site. Ser-151 lines the substrate pocket. Tyr-164 serves as the catalytic Proton acceptor.

The protein belongs to the short-chain dehydrogenases/reductases (SDR) family. SDR65C subfamily.

This chain is Tropinone reductase homolog At1g07440, found in Arabidopsis thaliana (Mouse-ear cress).